The chain runs to 149 residues: Probable flagellum biosynthesis repressor protein FlbT (149 aa).

Belongs to the FlbT family.

Has a post-transcriptional repressor function in flagellum biogenesis. Associates with the 5'-UTR of fljK mRNA and promotes its degradation. The protein is Probable flagellum biosynthesis repressor protein FlbT of Rhizobium etli (strain CIAT 652).